The sequence spans 365 residues: Sulfate/thiosulfate import ATP-binding protein CysA (365 aa).

The ABC transporter domain maps to 3-237 (IEIANIKKSF…PATRFVLEFM (235 aa)). 35–42 (GPSGSGKT) lines the ATP pocket.

The protein belongs to the ABC transporter superfamily. Sulfate/tungstate importer (TC 3.A.1.6) family. In terms of assembly, the complex is composed of two ATP-binding proteins (CysA), two transmembrane proteins (CysT and CysW) and a solute-binding protein (CysP).

The protein resides in the cell inner membrane. It catalyses the reaction sulfate(out) + ATP + H2O = sulfate(in) + ADP + phosphate + H(+). The catalysed reaction is thiosulfate(out) + ATP + H2O = thiosulfate(in) + ADP + phosphate + H(+). Part of the ABC transporter complex CysAWTP involved in sulfate/thiosulfate import. Responsible for energy coupling to the transport system. This chain is Sulfate/thiosulfate import ATP-binding protein CysA, found in Escherichia coli O6:H1 (strain CFT073 / ATCC 700928 / UPEC).